A 291-amino-acid chain; its full sequence is N-acetylmannosamine kinase (291 aa).

ATP contacts are provided by residues 5-12 (AIDIGGTK) and 132-139 (GVGGGVVS). Residues H156, C166, C168, and C173 each coordinate Zn(2+).

This sequence belongs to the ROK (NagC/XylR) family. NanK subfamily. Homodimer.

It catalyses the reaction an N-acyl-D-mannosamine + ATP = an N-acyl-D-mannosamine 6-phosphate + ADP + H(+). It functions in the pathway amino-sugar metabolism; N-acetylneuraminate degradation; D-fructose 6-phosphate from N-acetylneuraminate: step 2/5. In terms of biological role, catalyzes the phosphorylation of N-acetylmannosamine (ManNAc) to ManNAc-6-P. The protein is N-acetylmannosamine kinase of Shigella flexneri serotype 5b (strain 8401).